The chain runs to 206 residues: Guanylate kinase (206 aa).

Residues 6-184 (GTLYIISAPS…ALDDLKAIFR (179 aa)) enclose the Guanylate kinase-like domain. ATP is bound at residue 13 to 20 (APSGAGKS).

Belongs to the guanylate kinase family.

Its subcellular location is the cytoplasm. It catalyses the reaction GMP + ATP = GDP + ADP. Its function is as follows. Essential for recycling GMP and indirectly, cGMP. This chain is Guanylate kinase, found in Pseudomonas fluorescens (strain Pf0-1).